Consider the following 126-residue polypeptide: Histone H2B (126 aa).

Over residues M1–K12 the composition is skewed to low complexity. Residues M1–E36 are disordered. K6 and K13 each carry N6-acetyllysine. The span at K13–R34 shows a compositional bias: basic residues. At S15 the chain carries Phosphoserine. K16 and K21 each carry N6-acetyllysine. K121 participates in a covalent cross-link: Glycyl lysine isopeptide (Lys-Gly) (interchain with G-Cter in ubiquitin).

The protein belongs to the histone H2B family. In terms of assembly, the nucleosome is a histone octamer containing two molecules each of H2A, H2B, H3 and H4 assembled in one H3-H4 heterotetramer and two H2A-H2B heterodimers. The octamer wraps approximately 147 bp of DNA. Post-translationally, monoubiquitination of Lys-121 by the RNF20/40 complex gives a specific tag for epigenetic transcriptional activation and is also prerequisite for histone H3 'Lys-4' and 'Lys-79' methylation. Phosphorylated on Ser-15 during apoptosis; which facilitates apoptotic chromatin condensation.

Its subcellular location is the nucleus. The protein resides in the chromosome. Its function is as follows. Core component of nucleosome. Nucleosomes wrap and compact DNA into chromatin, limiting DNA accessibility to the cellular machineries which require DNA as a template. Histones thereby play a central role in transcription regulation, DNA repair, DNA replication and chromosomal stability. DNA accessibility is regulated via a complex set of post-translational modifications of histones, also called histone code, and nucleosome remodeling. This chain is Histone H2B, found in Cairina moschata (Muscovy duck).